The chain runs to 411 residues: Adenylosuccinate synthetase (411 aa).

Residues 11-17 (GDEGKGK) and 39-41 (GHT) each bind GTP. Aspartate 12 acts as the Proton acceptor in catalysis. Mg(2+) contacts are provided by aspartate 12 and glycine 39. Residues 12 to 15 (DEGK), 37 to 40 (NAGH), threonine 121, arginine 135, glutamine 215, threonine 230, and arginine 294 contribute to the IMP site. Histidine 40 serves as the catalytic Proton donor. 290–296 (TTTKRPR) contacts substrate. Residues arginine 296, 322-324 (KLD), and 400-402 (STS) contribute to the GTP site.

The protein belongs to the adenylosuccinate synthetase family. As to quaternary structure, homodimer. It depends on Mg(2+) as a cofactor.

The protein localises to the cytoplasm. It catalyses the reaction IMP + L-aspartate + GTP = N(6)-(1,2-dicarboxyethyl)-AMP + GDP + phosphate + 2 H(+). It participates in purine metabolism; AMP biosynthesis via de novo pathway; AMP from IMP: step 1/2. In terms of biological role, plays an important role in the de novo pathway of purine nucleotide biosynthesis. Catalyzes the first committed step in the biosynthesis of AMP from IMP. The chain is Adenylosuccinate synthetase from Helicobacter pylori (strain G27).